A 1295-amino-acid chain; its full sequence is DNA-directed RNA polymerase subunit beta' (1295 aa).

Zn(2+) is bound by residues cysteine 66, cysteine 68, cysteine 81, and cysteine 84. Mg(2+) contacts are provided by aspartate 562, aspartate 564, and aspartate 566. Positions 901, 975, 982, and 985 each coordinate Zn(2+).

The protein belongs to the RNA polymerase beta' chain family. As to quaternary structure, the RNAP catalytic core consists of 2 alpha, 1 beta, 1 beta' and 1 omega subunit. When a sigma factor is associated with the core the holoenzyme is formed, which can initiate transcription. Mg(2+) is required as a cofactor. It depends on Zn(2+) as a cofactor.

The enzyme catalyses RNA(n) + a ribonucleoside 5'-triphosphate = RNA(n+1) + diphosphate. Functionally, DNA-dependent RNA polymerase catalyzes the transcription of DNA into RNA using the four ribonucleoside triphosphates as substrates. This Rubrobacter xylanophilus (strain DSM 9941 / JCM 11954 / NBRC 16129 / PRD-1) protein is DNA-directed RNA polymerase subunit beta'.